Consider the following 432-residue polypeptide: Luc7-like protein 3 (432 aa).

At M1 the chain carries N-acetylmethionine. A phosphoserine mark is found at S3, S110, and S115. Residues 124-181 adopt a coiled-coil conformation; it reads KNEEKIQVLTDKIDVLLQQIEELGSEGKVEEAQGMMKLVEQLKEERELLRSTTSTIES. N6-acetyllysine is present on K231. The span at 234–287 shows a compositional bias: basic and acidic residues; it reads LRKRTEEPDRDERLKKEKQEREEREKEREREREERERKRRREEEEREKERARDR. A disordered region spans residues 234 to 432; sequence LRKRTEEPDR…IKSEGDTQSN (199 aa). Positions 288-301 are enriched in basic residues; sequence ERRKRSRSRSRHSS. Basic and acidic residues predominate over residues 302–311; it reads RTSDRRCSRS. Positions 312-367 are enriched in basic residues; that stretch reads RDHKRSRSRERRRSRSRDRRRSRSHDRSERKHRSRSRDRRRSKSRDRKSYKHRSKS. The span at 368 to 414 shows a compositional bias: basic and acidic residues; sequence RDREQDRKSKEKEKRGSDDKKSSVKSSSREKQSEDTNTESKESDTKN. The residue at position 420 (S420) is a Phosphoserine. Basic and acidic residues predominate over residues 421-432; it reads EDIKSEGDTQSN. A Glycyl lysine isopeptide (Lys-Gly) (interchain with G-Cter in SUMO1); alternate cross-link involves residue K424. Residue K424 forms a Glycyl lysine isopeptide (Lys-Gly) (interchain with G-Cter in SUMO2); alternate linkage. Phosphoserine is present on residues S425 and S431.

The protein belongs to the Luc7 family. As to quaternary structure, may interact with SFRS1 and form homodimers. Interacts with JMJD6. Interacts with RBM25. Interacts with RSRC1 (via Arg/Ser-rich domain). Interacts with RRP1B.

It localises to the nucleus speckle. In terms of biological role, binds cAMP regulatory element DNA sequence. May play a role in RNA splicing. The sequence is that of Luc7-like protein 3 (LUC7L3) from Bos taurus (Bovine).